We begin with the raw amino-acid sequence, 110 residues long: Urease subunit beta (110 aa).

It belongs to the urease beta subunit family. Heterotrimer of UreA (gamma), UreB (beta) and UreC (alpha) subunits. Three heterotrimers associate to form the active enzyme.

The protein resides in the cytoplasm. It carries out the reaction urea + 2 H2O + H(+) = hydrogencarbonate + 2 NH4(+). Its pathway is nitrogen metabolism; urea degradation; CO(2) and NH(3) from urea (urease route): step 1/1. This chain is Urease subunit beta, found in Pseudoalteromonas translucida (strain TAC 125).